The following is a 129-amino-acid chain: Lysozyme C (129 aa).

The C-type lysozyme domain maps to 1–129; that stretch reads KIYTRCELAA…VSKWIKDCKL (129 aa). 4 disulfides stabilise this stretch: Cys6-Cys127, Cys30-Cys115, Cys64-Cys80, and Cys76-Cys94. Residues Glu35 and Asp52 contribute to the active site.

The protein belongs to the glycosyl hydrolase 22 family. In terms of assembly, monomer.

It is found in the secreted. The catalysed reaction is Hydrolysis of (1-&gt;4)-beta-linkages between N-acetylmuramic acid and N-acetyl-D-glucosamine residues in a peptidoglycan and between N-acetyl-D-glucosamine residues in chitodextrins.. Functionally, lysozymes have primarily a bacteriolytic function; those in tissues and body fluids are associated with the monocyte-macrophage system and enhance the activity of immunoagents. This is Lysozyme C (LYZ) from Crax fasciolata (Bare-faced curassow).